We begin with the raw amino-acid sequence, 318 residues long: MSLNPDLAAYLQLVEAGRSAGKVLPMHALEADEARRQFEESSALIAGKADEPDCISDLSLTTRDGHTLPVRLYRPPQDDPALAGAALLYLHGGGYVVGSLDSHDTLCWNLAQDAGVPVIAVGYRLAPQWRFPTASDDALDAWRWLVEQAEALGIDAQRLAVVGDSVGGSLATILANQLAAQRELAAPRLQVMIYPVTDASCRRPSVQRYGSGYLLEAQTLEWFYQQYATVPADRLDPRFSPLLGSVASNSAPALMLIAECDPLHDQGVAYARHLEQAGVAVQLAVIPGVTHDFMRMGSIIEEADEGLVMVVEALQQHL.

Residues Ser-165, Asp-261, and His-291 contribute to the active site.

It belongs to the 'GDXG' lipolytic enzyme family. In terms of assembly, monomer.

Its subcellular location is the cytoplasm. The catalysed reaction is ethyl acetate + H2O = ethanol + acetate + H(+). Its activity is regulated as follows. Inhibited by the serine protease inhibitor phenylmethylsulfonyl fluoride, the histidine reagent diethylpyrocarbonate and two sulfhydryl reagents, mercuric chloride and naphthol AS-D chloroacetate. Not inhibited by EDTA. Its function is as follows. Esterase that catalyzes the hydrolysis of ethyl acetate. Can also use propyl acetate and the chromogenic substrates alpha-naphthyl acetate, alpha-naphthyl propionate, alpha-naphthyl caproate and 4-nitrophenyl acetate, with a preference for short-chain aliphatic esters. Highest activity is obtained in vitro with propyl acetate, followed by ethyl acetate. In vivo, could be involved in pyoverdine biosynthesis, but its specific role and its in vivo substrate have not been identified. This chain is Ethyl acetate hydrolase, found in Pseudomonas putida (Arthrobacter siderocapsulatus).